We begin with the raw amino-acid sequence, 311 residues long: Methionyl-tRNA formyltransferase (311 aa).

112-115 (SLLP) is a (6S)-5,6,7,8-tetrahydrofolate binding site.

It belongs to the Fmt family.

It carries out the reaction L-methionyl-tRNA(fMet) + (6R)-10-formyltetrahydrofolate = N-formyl-L-methionyl-tRNA(fMet) + (6S)-5,6,7,8-tetrahydrofolate + H(+). Its function is as follows. Attaches a formyl group to the free amino group of methionyl-tRNA(fMet). The formyl group appears to play a dual role in the initiator identity of N-formylmethionyl-tRNA by promoting its recognition by IF2 and preventing the misappropriation of this tRNA by the elongation apparatus. This Rhizobium meliloti (strain 1021) (Ensifer meliloti) protein is Methionyl-tRNA formyltransferase.